Reading from the N-terminus, the 145-residue chain is 3-hydroxyacyl-[acyl-carrier-protein] dehydratase FabZ (145 aa).

H51 is a catalytic residue.

Belongs to the thioester dehydratase family. FabZ subfamily.

It is found in the cytoplasm. The catalysed reaction is a (3R)-hydroxyacyl-[ACP] = a (2E)-enoyl-[ACP] + H2O. Its function is as follows. Involved in unsaturated fatty acids biosynthesis. Catalyzes the dehydration of short chain beta-hydroxyacyl-ACPs and long chain saturated and unsaturated beta-hydroxyacyl-ACPs. In Macrococcus caseolyticus (strain JCSC5402) (Macrococcoides caseolyticum), this protein is 3-hydroxyacyl-[acyl-carrier-protein] dehydratase FabZ.